Reading from the N-terminus, the 541-residue chain is Membrane protein insertase YidC (541 aa).

The helical transmembrane segment at 6–26 threads the bilayer; the sequence is SLLVLALIFISFLVYQQWQLD. The segment at 34–56 is disordered; it reads EQTTSITATSDVPASSPSNSQAI. Transmembrane regions (helical) follow at residues 337-357, 416-436, 454-474, and 495-515; these read FWLL…IICV, LGGC…YWTF, LSAQ…MFLL, and PLVF…YWLV.

Belongs to the OXA1/ALB3/YidC family. Type 1 subfamily. In terms of assembly, interacts with the Sec translocase complex via SecD. Specifically interacts with transmembrane segments of nascent integral membrane proteins during membrane integration.

The protein localises to the cell inner membrane. Required for the insertion and/or proper folding and/or complex formation of integral membrane proteins into the membrane. Involved in integration of membrane proteins that insert both dependently and independently of the Sec translocase complex, as well as at least some lipoproteins. Aids folding of multispanning membrane proteins. This Haemophilus influenzae (strain ATCC 51907 / DSM 11121 / KW20 / Rd) protein is Membrane protein insertase YidC.